The sequence spans 315 residues: ADP/ATP translocase 4 (315 aa).

The Mitochondrial intermembrane portion of the chain corresponds to 1–19; the sequence is MHREPAKKKAEKRLFDASS. One copy of the Solcar 1 repeat lies at 18-110; it reads SSFGKDLLAG…FAFKDKYKQL (93 aa). Residues 20–49 traverse the membrane as a helical segment; that stretch reads FGKDLLAGGVAAAVSKTAVAPIERVKLLLQ. The Mitochondrial matrix portion of the chain corresponds to 50–86; that stretch reads VQASSKQISPEARYKGMVDCLVRIPREQGFFSFWRGN. Residues 87-111 traverse the membrane as a helical segment; the sequence is LANVIRYFPTQALNFAFKDKYKQLF. ADP contacts are provided by arginine 92 and lysine 104. Topologically, residues 112 to 121 are mitochondrial intermembrane; sequence MSGVNKEKQF. Residues 122–142 traverse the membrane as a helical segment; the sequence is WRWFLANLASGGAAGATSLCV. Solcar repeat units follow at residues 123–213 and 220–307; these read RWFL…VKGL and TPFL…IKEF. Topologically, residues 143–190 are mitochondrial matrix; that stretch reads VYPLDFARTRLGVDIGKGPEERQFKGLGDCIMKIAKSDGIAGLYQGFG. Residues 191–211 traverse the membrane as a helical segment; the sequence is VSVQGIIVYRASYFGAYDTVK. Over 212-222 the chain is Mitochondrial intermembrane; it reads GLLPKPKKTPF. The helical transmembrane segment at 223-243 threads the bilayer; sequence LVSFFIAQVVTTCSGILSYPF. Residues 244–283 lie on the Mitochondrial matrix side of the membrane; sequence DTVRRRMMMQSGEAKRQYKGTLDCFVKIYQHEGISSFFRG. ADP is bound at residue arginine 247. The tract at residues 247–252 is important for transport activity; sequence RRRMMM. A Nucleotide carrier signature motif motif is present at residues 247–252; the sequence is RRRMMM. The chain crosses the membrane as a helical span at residues 284-301; it reads AFSNVLRGTGGALVLVLY. Residues 302 to 315 lie on the Mitochondrial intermembrane side of the membrane; that stretch reads DKIKEFFHIDIGGR.

This sequence belongs to the mitochondrial carrier (TC 2.A.29) family. Monomer. Expressed in brain, liver, sperm and testis. In testis, expressed at higher level in spermatocytes, while it is expressed at lower level in spermatogonial cells. Expressed in erythrocytes (at protein level).

Its subcellular location is the mitochondrion inner membrane. It localises to the membrane. It is found in the cell projection. The protein resides in the cilium. The protein localises to the flagellum membrane. The enzyme catalyses ADP(in) + ATP(out) = ADP(out) + ATP(in). The catalysed reaction is dATP(out) + ADP(in) = dATP(in) + ADP(out). It catalyses the reaction dADP(in) + ADP(out) = dADP(out) + ADP(in). It carries out the reaction H(+)(in) = H(+)(out). Its activity is regulated as follows. The matrix-open state (m-state) is inhibited by the membrane-permeable bongkrekic acid (BKA). The cytoplasmic-open state (c-state) is inhibited by the membrane-impermeable toxic inhibitor carboxyatractyloside (CATR). Proton transporter activity is inhibited by ADP:ATP antiporter activity. Its function is as follows. ADP:ATP antiporter that mediates import of ADP into the mitochondrial matrix for ATP synthesis, and export of ATP out to fuel the cell. Cycles between the cytoplasmic-open state (c-state) and the matrix-open state (m-state): operates by the alternating access mechanism with a single substrate-binding site intermittently exposed to either the cytosolic (c-state) or matrix (m-state) side of the inner mitochondrial membrane. Specifically required during spermatogenesis, probably to mediate ADP:ATP exchange in spermatocytes. Large ATP supplies from mitochondria may be critical for normal progression of spermatogenesis during early stages of meiotic prophase I, including DNA double-strand break repair and chromosomal synapsis. In addition to its ADP:ATP antiporter activity, also involved in mitochondrial uncoupling and mitochondrial permeability transition pore (mPTP) activity. Plays a role in mitochondrial uncoupling by acting as a proton transporter: proton transport uncouples the proton flows via the electron transport chain and ATP synthase to reduce the efficiency of ATP production and cause mitochondrial thermogenesis. Proton transporter activity is inhibited by ADP:ATP antiporter activity, suggesting that SLC25A31/ANT4 acts as a master regulator of mitochondrial energy output by maintaining a delicate balance between ATP production (ADP:ATP antiporter activity) and thermogenesis (proton transporter activity). Proton transporter activity requires free fatty acids as cofactor, but does not transport it. Among nucleotides, may also exchange ADP for dATP and dADP. Also plays a key role in mPTP opening, a non-specific pore that enables free passage of the mitochondrial membranes to solutes of up to 1.5 kDa, and which contributes to cell death. It is however unclear if SLC25A31/ANT4 constitutes a pore-forming component of mPTP or regulates it. The sequence is that of ADP/ATP translocase 4 from Homo sapiens (Human).